The following is a 343-amino-acid chain: Uroporphyrinogen decarboxylase (343 aa).

Substrate contacts are provided by residues 23–27 (RQAGR), Asp73, Tyr149, Thr204, and His320.

This sequence belongs to the uroporphyrinogen decarboxylase family. Homodimer.

It localises to the cytoplasm. It carries out the reaction uroporphyrinogen III + 4 H(+) = coproporphyrinogen III + 4 CO2. It participates in porphyrin-containing compound metabolism; protoporphyrin-IX biosynthesis; coproporphyrinogen-III from 5-aminolevulinate: step 4/4. Functionally, catalyzes the decarboxylation of four acetate groups of uroporphyrinogen-III to yield coproporphyrinogen-III. This is Uroporphyrinogen decarboxylase from Bradyrhizobium sp. (strain BTAi1 / ATCC BAA-1182).